Here is a 735-residue protein sequence, read N- to C-terminus: Transcription factor RFX4 (735 aa).

The tract at residues 25 to 59 (SESKRFSSHSSIGNISNDENEEKENNRASKPHSTP) is disordered. A DNA-binding region spans residues 44–126 (NEEKENNRAS…RRLGTRGQSK (83 aa)). The RFX-type winged-helix DNA-binding region spans 61–136 (TLQWLEENYE…YHYYGIAVKE (76 aa)). The necessary for dimerization stretch occupies residues 315–487 (RFSQILKRQT…NELMRAMKGE (173 aa)).

It belongs to the RFX family.

The protein localises to the nucleus. Its function is as follows. May activate transcription by interacting directly with the X-box. The protein is Transcription factor RFX4 (rfx4) of Danio rerio (Zebrafish).